Reading from the N-terminus, the 251-residue chain is Probable transcriptional regulatory protein SYNPCC7002_A0851 (251 aa).

A Response regulatory domain is found at 20–141 (RILVVEDEAV…ELVARCRALL (122 aa)). A 4-aspartylphosphate modification is found at aspartate 76. Positions 153 to 251 (NSVRQFKDIS…TVRGFGYRFG (99 aa)) form a DNA-binding region, ompR/PhoB-type.

Phosphorylation.

This chain is Probable transcriptional regulatory protein SYNPCC7002_A0851, found in Picosynechococcus sp. (strain ATCC 27264 / PCC 7002 / PR-6) (Agmenellum quadruplicatum).